Consider the following 399-residue polypeptide: Proteinase-activated receptor 2 (399 aa).

An N-terminal signal peptide occupies residues 1-25; that stretch reads MRSLSLAWLLGGITLLAASVSCSRT. The propeptide at 26–38 is removed for receptor activation; the sequence is ENLAPGRNNSKGR. Residue Asn-33 is glycosylated (N-linked (GlcNAc...) asparagine). Over 39 to 73 the chain is Extracellular; the sequence is SLIGRLETQPPITGKGVPVEPGFSIDEFSASILTG. The helical transmembrane segment at 74–103 threads the bilayer; it reads KLTTVFLPVVYIIVFVIGLPSNGMALWIFL. The Cytoplasmic segment spans residues 104–110; sequence FRTKKKH. The chain crosses the membrane as a helical span at residues 111-139; it reads PAVIYMANLALADLLSVIWFPLKISYHLH. Residues 140–151 are Extracellular-facing; sequence GNNWVYGEALCK. Cys-150 and Cys-228 form a disulfide bridge. A helical membrane pass occupies residues 152–179; the sequence is VLIGFFYGNMYCSILFMTCLSVQRYWVI. Topologically, residues 180-185 are cytoplasmic; that stretch reads VNPMGH. The helical transmembrane segment at 186–213 threads the bilayer; sequence PRKKANIAVGVSLAIWLLIFLVTIPLYV. Over 214 to 237 the chain is Extracellular; it reads MKQTIYIPALNITTCHDVLPEEVL. Asn-224 carries an N-linked (GlcNAc...) asparagine glycan. A helical transmembrane segment spans residues 238 to 271; the sequence is VGDMFNYFLSLAIGVFLFPALLTASAYVLMIKTL. The Cytoplasmic segment spans residues 272–279; the sequence is RSSAMDEH. The helical transmembrane segment at 280–319 threads the bilayer; sequence SEKKRQRAIRLIITVLAMYFICFAPSNLLLVVHYFLIKTQ. The Extracellular segment spans residues 320 to 325; that stretch reads RQSHVY. The helical transmembrane segment at 326 to 349 threads the bilayer; sequence ALYLVALCLSTLNSCIDPFVYYFV. The Cytoplasmic portion of the chain corresponds to 350 to 399; the sequence is SKDFRDHARNALLCRSVRTVNRMQISLSSNKFSRKSGSYSSSSTSVKTSY. The S-palmitoyl cysteine moiety is linked to residue Cys-363.

The protein belongs to the G-protein coupled receptor 1 family. In terms of assembly, interacts with TLR4, COPS5 and TMED2. Interacts with GNAQ, GNA11, GNA12, GNA13 and GNA14. In terms of processing, a proteolytic cleavage generates a new N-terminus that functions as a tethered ligand. Activating serine proteases include trypsin, mast cell tryptase, coagulation factors VII and Xa, myeloblastin/PRTN3 and membrane-type serine protease 1/ST14. Proposed subsequent cleavage by serine proteases is leading to receptor deactivation and include neutrophil elastase and cathepsin G. At least in part, implicated proteases are also shown to activate the receptor; the glycosylation status of the receptor is thought to contribute to the difference. Post-translationally, N-glycosylated and sialylated. Multiple phosphorylated on serine and threonine residues in the cytoplasmic region upon receptor activation; required for receptor desensitization and recruitment of beta-arrestin. In terms of processing, monoubiquitinated by Cbl at the plasma membrane and in early endosomes; not required for receptor endocytosis but for translocation to late endosomes or lysosomes. Deubiquitination involves Stambp and Usp8; required for lysosomal trafficking and receptor degradation.

Its subcellular location is the cell membrane. Receptor for trypsin and trypsin-like enzymes coupled to G proteins. Its function is mediated through the activation of several signaling pathways including phospholipase C (PLC), intracellular calcium, mitogen-activated protein kinase (MAPK), I-kappaB kinase/NF-kappaB and Rho. Can also be transactivated by cleaved F2r/Par1. Involved in modulation of inflammatory responses and regulation of innate and adaptive immunity, and acts as a sensor for proteolytic enzymes generated during infection. Generally is promoting inflammation. Can signal synergistically with Tlr4 and probably Tlr2 in inflammatory responses and modulates Tlr3 signaling. Has a protective role in establishing the endothelial barrier; the activity involves coagulation factor X. Regulates endothelial cell barrier integrity during neutrophil extravasation, probably following proteolytic cleavage by PRTN3. Proposed to have a bronchoprotective role in airway epithelium, but also shown to compromise the airway epithelial barrier by interrupting E-cadherin adhesion. Involved in the regulation of vascular tone; activation results in hypotension presumably mediated by vasodilation. Associates with a subset of G proteins alpha subunits such as GNAQ, GNA11, GNA14, GNA12 and GNA13, but probably not with G(o)-alpha, G(i) subunit alpha-1 and G(i) subunit alpha-2. Believed to be a class B receptor which internalizes as a complex with arrestin and traffic with it to endosomal vesicles, presumably as desensitized receptor, for extended periods of time. Mediates inhibition of TNF-alpha stimulated JNK phosphorylation via coupling to GNAQ and GNA11; the function involves dissociation of Ripk1 and Tradd from Tnfr1. Mediates phosphorylation of nuclear factor NF-kappa-B RELA subunit at 'Ser-536'; the function involves Ikbkb and is predominantly independent of G proteins. Involved in cellular migration. Involved in cytoskeletal rearrangement and chemotaxis through beta-arrestin-promoted scaffolds; the function is independent of GNAQ and GNA11 and involves promotion of cofilin dephosphorylation and actin filament severing. Induces redistribution of Cops5 from the plasma membrane to the cytosol and activation of the JNK cascade is mediated by Cops5. Involved in the recruitment of leukocytes to the sites of inflammation and is the major PAR receptor capable of modulating eosinophil function such as pro-inflammatory cytokine secretion, superoxide production and degranulation. During inflammation promotes dendritic cell maturation, trafficking to the lymph nodes and subsequent T-cell activation. Involved in antimicrobial response of innate immune cells; activation enhances phagocytosis of Gram-positive and killing of Gram-negative bacteria. Acts synergistically with interferon-gamma in enhancing antiviral responses. Mediates activation of pro-inflammatory and pro-fibrotic responses in fibroblasts, triggered by coagulation factor Xa (F10). Probably mediates activation of barrier protective signaling responses in endothelial cells, triggered by coagulation factor Xa (F10). The chain is Proteinase-activated receptor 2 (F2rl1) from Mus musculus (Mouse).